Here is a 162-residue protein sequence, read N- to C-terminus: ATP synthase subunit b (162 aa).

A helical transmembrane segment spans residues 2 to 22 (LEFNATLLAQIVDFIILLIFL).

Belongs to the ATPase B chain family. In terms of assembly, F-type ATPases have 2 components, F(1) - the catalytic core - and F(0) - the membrane proton channel. F(1) has five subunits: alpha(3), beta(3), gamma(1), delta(1), epsilon(1). F(0) has three main subunits: a(1), b(2) and c(10-14). The alpha and beta chains form an alternating ring which encloses part of the gamma chain. F(1) is attached to F(0) by a central stalk formed by the gamma and epsilon chains, while a peripheral stalk is formed by the delta and b chains.

It localises to the cell membrane. F(1)F(0) ATP synthase produces ATP from ADP in the presence of a proton or sodium gradient. F-type ATPases consist of two structural domains, F(1) containing the extramembraneous catalytic core and F(0) containing the membrane proton channel, linked together by a central stalk and a peripheral stalk. During catalysis, ATP synthesis in the catalytic domain of F(1) is coupled via a rotary mechanism of the central stalk subunits to proton translocation. Functionally, component of the F(0) channel, it forms part of the peripheral stalk, linking F(1) to F(0). The chain is ATP synthase subunit b from Pelotomaculum thermopropionicum (strain DSM 13744 / JCM 10971 / SI).